Reading from the N-terminus, the 141-residue chain is MAKTVLRQYWDIPEGTECHRKTYATTSIGGAAGLVVSAYSVALKTPTSFLEGVARTGRYTFTAAAIGAIFGLTSCISAQVREKPDDPLNYLIGGCAGGLILGARTRSYGIGAAACAYMGLTAALVKMGQLEGWQVFAEPKV.

An N-acetylalanine modification is found at Ala-2. 2 helical membrane passes run Thr-22–Leu-43 and Arg-58–Val-80.

In terms of assembly, complex I is composed of 45 different subunits.

It is found in the mitochondrion inner membrane. Accessory subunit of the mitochondrial membrane respiratory chain NADH dehydrogenase (Complex I), that is believed not to be involved in catalysis. Complex I functions in the transfer of electrons from NADH to the respiratory chain. The immediate electron acceptor for the enzyme is believed to be ubiquinone. The chain is NADH dehydrogenase [ubiquinone] 1 alpha subcomplex subunit 11 (NDUFA11) from Bos taurus (Bovine).